Consider the following 355-residue polypeptide: Probable nitronate monooxygenase (355 aa).

Residues asparagine 71, glutamine 175, glycine 180, glycine 218, and 237–240 each bind FMN; that span reads QMGT.

This sequence belongs to the nitronate monooxygenase family. NMO class I subfamily. FMN is required as a cofactor.

It carries out the reaction 3 propionate 3-nitronate + 3 O2 + H2O = 3 3-oxopropanoate + 2 nitrate + nitrite + H2O2 + 3 H(+). Its function is as follows. Nitronate monooxygenase that uses molecular oxygen to catalyze the oxidative denitrification of alkyl nitronates. Acts on propionate 3-nitronate (P3N), the presumed physiological substrate. Probably functions in the detoxification of P3N, a metabolic poison produced by plants and fungi as a defense mechanism. The protein is Probable nitronate monooxygenase of Staphylococcus aureus (strain MRSA252).